A 717-amino-acid polypeptide reads, in one-letter code: Polyribonucleotide nucleotidyltransferase (717 aa).

Mg(2+) contacts are provided by aspartate 496 and aspartate 502. A KH domain is found at 563–622 (PRLLTIKIDPDLIGLVIGPGGKTVKGITEQTGTKIDIDDDGTVTISSTDGEQAEKAKRLI). The S1 motif domain maps to 632-700 (GEVYLGRVTR…SKGRLNLTRL (69 aa)).

This sequence belongs to the polyribonucleotide nucleotidyltransferase family. The cofactor is Mg(2+).

The protein localises to the cytoplasm. The catalysed reaction is RNA(n+1) + phosphate = RNA(n) + a ribonucleoside 5'-diphosphate. Involved in mRNA degradation. Catalyzes the phosphorolysis of single-stranded polyribonucleotides processively in the 3'- to 5'-direction. The chain is Polyribonucleotide nucleotidyltransferase from Microcystis aeruginosa (strain NIES-843 / IAM M-2473).